A 287-amino-acid chain; its full sequence is Cuticle collagen 38 (287 aa).

An N-terminal signal peptide occupies residues 1–19 (MSKYLVPVCASISLVAVFG). The interval 95–287 (QGCPPGPPGP…CPCPARAKKH (193 aa)) is disordered. Over residues 98-107 (PPGPPGPPGL) the composition is skewed to pro residues. 2 consecutive Collagen-like domains span residues 145–200 (QGPP…GSEG) and 215–273 (GQPG…SIGP). A compositionally biased stretch (low complexity) spans 184–205 (TGEQGPQGEPGTEGSEGPTGQD). Residues 206 to 215 (GTIGGPGLPG) show a composition bias toward gly residues. A compositionally biased stretch (low complexity) spans 238–252 (DGEQGPQGPQGPDGQ).

It belongs to the cuticular collagen family. As to quaternary structure, collagen polypeptide chains are complexed within the cuticle by disulfide bonds and other types of covalent cross-links.

The protein resides in the nucleus. In terms of biological role, probable cuticular collagen-like protein. Nematode cuticles are composed largely of collagen-like proteins. The cuticle functions both as an exoskeleton and as a barrier to protect the worm from its environment. Acts downstream of the Wnt signaling pathway, perhaps in the formation of the adult cuticle. The protein is Cuticle collagen 38 of Caenorhabditis elegans.